The chain runs to 953 residues: Protein translocase subunit SecA 1 (953 aa).

ATP contacts are provided by residues Q83, 101–105 (GEGKT), and D490. Low complexity predominate over residues 854–867 (AAAAAAKASDSAAK). A disordered region spans residues 854–953 (AAAAAAKASD…DRPAKSHRKG (100 aa)). Residues 929–947 (SRRERREAARKQAKADRPA) show a composition bias toward basic and acidic residues.

It belongs to the SecA family. As to quaternary structure, monomer and homodimer. Part of the essential Sec protein translocation apparatus which comprises SecA, SecYEG and auxiliary proteins SecDF. Other proteins may also be involved.

It localises to the cell membrane. The protein localises to the cytoplasm. The enzyme catalyses ATP + H2O + cellular proteinSide 1 = ADP + phosphate + cellular proteinSide 2.. In terms of biological role, part of the Sec protein translocase complex. Interacts with the SecYEG preprotein conducting channel. Has a central role in coupling the hydrolysis of ATP to the transfer of proteins into and across the cell membrane, serving as an ATP-driven molecular motor driving the stepwise translocation of polypeptide chains across the membrane. This Mycolicibacterium smegmatis (strain ATCC 700084 / mc(2)155) (Mycobacterium smegmatis) protein is Protein translocase subunit SecA 1.